Reading from the N-terminus, the 1280-residue chain is Dynactin subunit 1 (1280 aa).

A disordered region spans residues 1–26 (MAQSKRHMYNRTPSGSRMSTEASARP). Positions 11–22 (RTPSGSRMSTEA) are enriched in polar residues. Positions 48–90 (GATLFATGKWVGVILDEAKGKNDGTVQGRKYFTCDEGHGIFVR) constitute a CAP-Gly domain. A disordered region spans residues 99 to 223 (DGADTTSPET…SKEEEGLRDQ (125 aa)). Residues 102–114 (DTTSPETPDSSAS) show a composition bias toward polar residues. Residues Thr108, Thr145, Thr146, and Thr147 each carry the phosphothreonine modification. The span at 129-152 (SKLRGLKPKKAPTARKTTTRRPKP) shows a compositional bias: basic residues. Low complexity predominate over residues 161–205 (AGPSSSLGPSGSASAGELSSSEPSTPAQTPLAAPIIPTPALTSPG). At Ser179 the chain carries Phosphoserine; by PLK1. Position 212 is a phosphoserine; by CDK1 (Ser212). The span at 214 to 223 (SKEEEGLRDQ) shows a compositional bias: basic and acidic residues. 2 coiled-coil regions span residues 214-513 (SKEE…ADYQ) and 942-1048 (LKLE…EGLR). Positions 910–1280 (EYDAERPPSK…LHQLHGRLIS (371 aa)) are interaction with HPS6. The segment at 1064-1089 (GEEQQRGGTPGQAPGALPGPGPVKDS) is disordered. A coiled-coil region spans residues 1184 to 1213 (SAQLMEQVAQLKSLSDTIEKLKDEVLKETV).

This sequence belongs to the dynactin 150 kDa subunit family. Monomer and homodimer. Subunit of dynactin, a multiprotein complex part of a tripartite complex with dynein and a adapter, such as BICDL1, BICD2 or HOOK3. The dynactin complex is built around ACTR1A/ACTB filament and consists of an actin-related filament composed of a shoulder domain, a pointed end and a barbed end. Its length is defined by its flexible shoulder domain. The soulder is composed of 2 DCTN1 subunits, 4 DCTN2 and 2 DCTN3. DCTN1/p150(glued) binds directly to microtubules and to cytoplasmic dynein. The 4 DCNT2 (via N-terminus) bind the ACTR1A filament and act as molecular rulers to determine the length. The pointed end is important for binding dynein-dynactin cargo adapters. Consists of 4 subunits: ACTR10, DCNT4, DCTN5 and DCTN6. The barbed end is composed of a CAPZA1:CAPZB heterodimers, which binds ACTR1A/ACTB filament and dynactin and stabilizes dynactin. Interacts with the C-terminus of MAPRE1, MAPRE2 and MAPRE3. Interacts (via C-terminus) with SNX6. Interacts with CLN3, DYNAP, ECPAS and FBXL5. Interacts with MISP; this interaction regulates its distribution at the cell cortex. Interacts with CEP131. Interacts with CEP126. Interacts with CLIP1. Interacts with dynein intermediate chain and dynein heavy chain. Interacts with PLK1 (via POLO-box domain). Interacts with TBCB. Binds preferentially to tyrosinated microtubules than to detyrosinated microtubules. Interacts with PARD6A. Interacts with HPS6. Interacts with KIF3A. Interacts with BICD2. Interacts with DST (isoform 9). Interacts with DST (isoform 1). Identified in a complex with MREG and RILP. Interacts with BCCIP (isoform 2/alpha). Interacts with DCDC1. Interacts with AKNA. Interacts with DYNC1I2. Interacts with RUFY3 and RUFY4. Ubiquitinated by a SCF complex containing FBXL5, leading to its degradation by the proteasome. Post-translationally, phosphorylation by SLK at Thr-145, Thr-146 and Thr-147 targets DCTN1 to the centrosome. It is uncertain if SLK phosphorylates all three threonines or one or two of them. PLK1-mediated phosphorylation at Ser-179 is essential for its localization in the nuclear envelope and promotes its dissociation from microtubules during early mitosis and positively regulates nuclear envelope breakdown during prophase. As to expression, ubiquitous with a high level expression observed in the brain (at protein level).

The protein resides in the cytoplasm. The protein localises to the cytoskeleton. It localises to the microtubule organizing center. Its subcellular location is the centrosome. It is found in the centriole. The protein resides in the spindle. The protein localises to the nucleus envelope. It localises to the cell cortex. In terms of biological role, part of the dynactin complex that activates the molecular motor dynein for ultra-processive transport along microtubules. Plays a key role in dynein-mediated retrograde transport of vesicles and organelles along microtubules by recruiting and tethering dynein to microtubules. Binds to both dynein and microtubules providing a link between specific cargos, microtubules and dynein. Essential for targeting dynein to microtubule plus ends, recruiting dynein to membranous cargos and enhancing dynein processivity (the ability to move along a microtubule for a long distance without falling off the track). Can also act as a brake to slow the dynein motor during motility along the microtubule. Can regulate microtubule stability by promoting microtubule formation, nucleation and polymerization and by inhibiting microtubule catastrophe in neurons. Inhibits microtubule catastrophe by binding both to microtubules and to tubulin, leading to enhanced microtubule stability along the axon. Plays a role in metaphase spindle orientation. Plays a role in centriole cohesion and subdistal appendage organization and function. Its recruitment to the centriole in a KIF3A-dependent manner is essential for the maintenance of centriole cohesion and the formation of subdistal appendage. Also required for microtubule anchoring at the mother centriole. Plays a role in primary cilia formation. The sequence is that of Dynactin subunit 1 (Dctn1) from Rattus norvegicus (Rat).